The primary structure comprises 423 residues: Gamma-glutamyl phosphate reductase (423 aa).

Low complexity predominate over residues 1-14 (MTLQAAPRSAAAQQ). A disordered region spans residues 1–25 (MTLQAAPRSAAAQQREPDLRQEVHD). Residues 15–25 (REPDLRQEVHD) show a composition bias toward basic and acidic residues.

Belongs to the gamma-glutamyl phosphate reductase family.

The protein localises to the cytoplasm. The catalysed reaction is L-glutamate 5-semialdehyde + phosphate + NADP(+) = L-glutamyl 5-phosphate + NADPH + H(+). The protein operates within amino-acid biosynthesis; L-proline biosynthesis; L-glutamate 5-semialdehyde from L-glutamate: step 2/2. In terms of biological role, catalyzes the NADPH-dependent reduction of L-glutamate 5-phosphate into L-glutamate 5-semialdehyde and phosphate. The product spontaneously undergoes cyclization to form 1-pyrroline-5-carboxylate. This Mycobacterium ulcerans (strain Agy99) protein is Gamma-glutamyl phosphate reductase.